The primary structure comprises 1088 residues: DNA-directed RNA polymerase subunit beta (1088 aa).

This sequence belongs to the RNA polymerase beta chain family. In terms of assembly, in plastids the minimal PEP RNA polymerase catalytic core is composed of four subunits: alpha, beta, beta', and beta''. When a (nuclear-encoded) sigma factor is associated with the core the holoenzyme is formed, which can initiate transcription.

It is found in the plastid. The protein localises to the chloroplast. It catalyses the reaction RNA(n) + a ribonucleoside 5'-triphosphate = RNA(n+1) + diphosphate. DNA-dependent RNA polymerase catalyzes the transcription of DNA into RNA using the four ribonucleoside triphosphates as substrates. This is DNA-directed RNA polymerase subunit beta from Ostreococcus tauri.